The primary structure comprises 125 residues: E4-ORF1 (125 aa).

Positions 122 to 125 match the PDZ-binding motif; it reads ATLV.

This sequence belongs to the dUTPase family. Binds to human MPDZ.

The protein localises to the host cytoplasm. The catalysed reaction is dUTP + H2O = dUMP + diphosphate + H(+). Plays a key role in virus oncogenecity in animals. Binds and sequesters human MUPP1/MPDZ protein in the cytoplasm, preventing it from playing a role in cellular proliferation regulation. Induces cell transformation, probably by inactivating MPDZ protein. This Homo sapiens (Human) protein is E4-ORF1 (E4).